The sequence spans 104 residues: N(4)-acetylcytidine amidohydrolase (104 aa).

An ASCH domain is found at 6-96 (ITFYQRFEAD…TIYPNEHESW (91 aa)). Lys-21 functions as the Proton acceptor in the catalytic mechanism. The Nucleophile role is filled by Thr-24. Glu-74 acts as the Proton donor in catalysis.

The protein belongs to the N(4)-acetylcytidine amidohydrolase family.

It carries out the reaction N(4)-acetylcytidine + H2O = cytidine + acetate + H(+). The enzyme catalyses N(4)-acetyl-2'-deoxycytidine + H2O = 2'-deoxycytidine + acetate + H(+). The catalysed reaction is N(4)-acetylcytosine + H2O = cytosine + acetate + H(+). Catalyzes the hydrolysis of N(4)-acetylcytidine (ac4C). In Haemophilus influenzae (strain 86-028NP), this protein is N(4)-acetylcytidine amidohydrolase.